The primary structure comprises 781 residues: Dual specificity protein kinase zakA (781 aa).

2 consecutive Protein kinase domains span residues 9-317 and 379-654; these read WEEI…HKLI and DKDD…EIGL. Residues 15-23 and lysine 44 each bind ATP; that span reads IGEGQYGRV. Aspartate 132 (proton acceptor) is an active-site residue. The disordered stretch occupies residues 168–209; sequence ETTNNNNNPNNNNNNNNNNNNNNNNNNNNNNNNNNINNINNN. Low complexity predominate over residues 171-209; it reads NNNNNPNNNNNNNNNNNNNNNNNNNNNNNNNNINNINNN. ATP-binding positions include 385–393 and lysine 406; that span reads GGAGNFGDV. Aspartate 507 (proton acceptor) is an active-site residue.

This sequence in the N-terminal section; belongs to the protein kinase superfamily. Ser/Thr protein kinase family. In the C-terminal section; belongs to the protein kinase superfamily. TKL Tyr protein kinase family. N-terminal serine/threonine domain is capable of autophosphorylation, in vitro, but to a lower extent than the tyrosine kinase domain. May function as a negative regulator of the tyrosine kinase domain. Post-translationally, C-terminal tyrosine kinase domain is capable of autophosphorylation, in vitro. ZakA and zak2 are coexpressed in prestalk cell population, zakA is enriched in pstB populations and zak1 in pstA populations. ZakA and zak2 are coexpressed in prespore cells, zakA expression levels are 10 fold higher than zak2.

The catalysed reaction is L-seryl-[protein] + ATP = O-phospho-L-seryl-[protein] + ADP + H(+). It carries out the reaction L-threonyl-[protein] + ATP = O-phospho-L-threonyl-[protein] + ADP + H(+). It catalyses the reaction L-tyrosyl-[protein] + ATP = O-phospho-L-tyrosyl-[protein] + ADP + H(+). Its function is as follows. Positive regulator of gsk3/gskA activity required for cell pattern formation and a downstream effector of carC. The kinases, gsk3/gskA, zakA and zak2, form part of a signaling pathway that responds to extracellular cyclic AMP. The pathway has a role in transcriptional regulation; required to direct prespore/spore fates during development. ZakA negatively regulates prestalk differentiation by regulating expression of ecmB. Phosphorylates Y-214 of gsk3/gskA, in vitro. The chain is Dual specificity protein kinase zakA (zakA) from Dictyostelium discoideum (Social amoeba).